The primary structure comprises 487 residues: UDP-N-acetylmuramate--L-alanine ligase (487 aa).

129-135 lines the ATP pocket; sequence GTHGKTT.

It belongs to the MurCDEF family.

The protein localises to the cytoplasm. It carries out the reaction UDP-N-acetyl-alpha-D-muramate + L-alanine + ATP = UDP-N-acetyl-alpha-D-muramoyl-L-alanine + ADP + phosphate + H(+). It participates in cell wall biogenesis; peptidoglycan biosynthesis. In terms of biological role, cell wall formation. The sequence is that of UDP-N-acetylmuramate--L-alanine ligase from Aliivibrio fischeri (strain ATCC 700601 / ES114) (Vibrio fischeri).